We begin with the raw amino-acid sequence, 230 residues long: V-type proton ATPase subunit E (230 aa).

Belongs to the V-ATPase E subunit family. V-ATPase is a heteromultimeric enzyme composed of a peripheral catalytic V1 complex (components A to H) attached to an integral membrane V0 proton pore complex (components: a, c, c', c'', d, e, f and VOA1).

The protein localises to the vacuole membrane. Subunit of the V1 complex of vacuolar(H+)-ATPase (V-ATPase), a multisubunit enzyme composed of a peripheral complex (V1) that hydrolyzes ATP and a membrane integral complex (V0) that translocates protons. V-ATPase is responsible for acidifying and maintaining the pH of intracellular compartments. The protein is V-type proton ATPase subunit E of Neurospora crassa (strain ATCC 24698 / 74-OR23-1A / CBS 708.71 / DSM 1257 / FGSC 987).